A 173-amino-acid polypeptide reads, in one-letter code: Putative metal-dependent hydrolase BC_2708 (173 aa).

Residues His-65, His-156, and His-160 each coordinate Zn(2+).

The protein belongs to the metal hydrolase YfiT family. As to quaternary structure, homodimer. It depends on Zn(2+) as a cofactor.

The protein resides in the cytoplasm. In terms of biological role, possible metal-dependent hydrolase. The chain is Putative metal-dependent hydrolase BC_2708 from Bacillus cereus (strain ATCC 14579 / DSM 31 / CCUG 7414 / JCM 2152 / NBRC 15305 / NCIMB 9373 / NCTC 2599 / NRRL B-3711).